The chain runs to 637 residues: Protein RRP6-like 1 (637 aa).

Residues 118–283 (VEEVKDLEDL…YIYDVMRMEL (166 aa)) form the 3'-5' exonuclease domain. An HRDC domain is found at 334-414 (NAVQLSIVAG…RRSMQNAAAF (81 aa)). Residues 553–565 (VDDDDDDDDDESY) show a composition bias toward acidic residues. The disordered stretch occupies residues 553-624 (VDDDDDDDDD…EDMRRRSEKH (72 aa)). Residues 580-598 (ETPSKGSPSLTQKPKTCNT) are compositionally biased toward polar residues. Residues 602 to 614 (VLDDDDDSESRED) are compositionally biased toward acidic residues.

It localises to the nucleus. It is found in the nucleoplasm. Functionally, acts as an important epigenetic regulator through multiple silencing mechanisms. Involved in transcriptional gene silencing (TGS). Plays a role for DNA methylation in the RNA-directed DNA methylation (RdDM) pathway. Contributes to the methylation status of the retrotransposon SN1. Required for DNA methylation only at a subset of RdDM target loci. Plays a regulatory role in RdDM through retention of non-coding RNAs (ncRNAs) in normal cells. Helps to retain Pol V-transcribed RNAs in chromatin to enable their scaffold function and is required for genome-wide Pol IV-dependent siRNA (24 nt siRNA) production that may involve retention of Pol IV transcripts. Involved in association with RRP6L2 in the silencing of the solo LTR locus. Controls levels of ncRNAs from the solo LTR locus. Seems to function independently of the RdDM pathway. Functions redundantly with RRP6L2 in the regulation of FLC locus. Participates in the maintenance of trimethylated 'Lys-27' (H3K27me3) at FLC locus via the regulation of antisense long non-coding RNAs (lncRNAs) and the regulation of diverse antisense RNAs derived from the FLC locus. Seems not involved in the exosomal RNA degradation. Can complement the growth defect of a yeast mutant lacking RRP6 exonuclease. The polypeptide is Protein RRP6-like 1 (Arabidopsis thaliana (Mouse-ear cress)).